Consider the following 499-residue polypeptide: Glycerol kinase (499 aa).

Residue threonine 13 participates in ADP binding. 3 residues coordinate ATP: threonine 13, threonine 14, and serine 15. Threonine 13 is a binding site for sn-glycerol 3-phosphate. Residue arginine 17 coordinates ADP. Sn-glycerol 3-phosphate-binding residues include arginine 83, glutamate 84, tyrosine 135, and aspartate 245. Glycerol contacts are provided by arginine 83, glutamate 84, tyrosine 135, aspartate 245, and glutamine 246. ADP-binding residues include threonine 267 and glycine 310. ATP is bound by residues threonine 267, glycine 310, glutamine 314, and glycine 411. Residues glycine 411 and asparagine 415 each contribute to the ADP site.

This sequence belongs to the FGGY kinase family.

The enzyme catalyses glycerol + ATP = sn-glycerol 3-phosphate + ADP + H(+). The protein operates within polyol metabolism; glycerol degradation via glycerol kinase pathway; sn-glycerol 3-phosphate from glycerol: step 1/1. With respect to regulation, inhibited by fructose 1,6-bisphosphate (FBP). Key enzyme in the regulation of glycerol uptake and metabolism. Catalyzes the phosphorylation of glycerol to yield sn-glycerol 3-phosphate. The protein is Glycerol kinase of Xanthomonas campestris pv. campestris (strain 8004).